A 122-amino-acid chain; its full sequence is Large ribosomal subunit protein uL14 (122 aa).

The protein belongs to the universal ribosomal protein uL14 family. In terms of assembly, part of the 50S ribosomal subunit. Forms a cluster with proteins L3 and L19. In the 70S ribosome, L14 and L19 interact and together make contacts with the 16S rRNA in bridges B5 and B8.

Functionally, binds to 23S rRNA. Forms part of two intersubunit bridges in the 70S ribosome. In Rhizobium etli (strain CIAT 652), this protein is Large ribosomal subunit protein uL14.